Consider the following 1247-residue polypeptide: Clustered mitochondria protein homolog (1247 aa).

The interval 1–43 is disordered; that stretch reads MTLGSETKTDVEVPIINGKHEIPQEENDSGHSSINTPDSSEPD. The segment covering 30–39 has biased composition (polar residues); the sequence is GHSSINTPDS. One can recognise a Clu domain in the interval 329 to 579; sequence SDSLRAIELT…RSMPPDVHYL (251 aa). Positions 1222-1247 are disordered; the sequence is GKQQNGTTEESKTTDVAAQLDNETLD.

This sequence belongs to the CLU family.

The protein resides in the cytoplasm. Its function is as follows. mRNA-binding protein involved in proper cytoplasmic distribution of mitochondria. The protein is Clustered mitochondria protein homolog of Caenorhabditis elegans.